Consider the following 144-residue polypeptide: Maximins 1/H1 (144 aa).

The first 18 residues, 1 to 18 (MNFKYIVAVSFLLASAYA), serve as a signal peptide directing secretion. Positions 19–43 (RSEENDEQSLSQRDVLEEESLREIR) are excised as a propeptide. N70 is subject to Asparagine amide. Positions 74-123 (TAEEHEVMKRLEAVMRDLDSLDYPEEAAERETRSFNQEEIANLFTKKEKR) are excised as a propeptide. L143 carries the post-translational modification Leucine amide.

It belongs to the bombinin family. In terms of tissue distribution, expressed by the skin glands.

It is found in the secreted. Functionally, antibacterial peptide with amphipathic alpha-helical structure that has activity against both Gram-positive and Gram-negative bacteria. Also shows antimicrobial activity against the fungus C.albicans, but not against A.flavus nor P.uticale. It has little hemolytic activity. It possess a significant cytotoxicity against tumor cell lines, but does not possess a significant anti-HIV activity. Also shows high spermicidal activity. In terms of biological role, antibacterial peptide with activity against both Gram-positive and Gram-negative bacteria. Also shows antimicrobial activity against the fungus C.albicans. In addition, shows strong hemolytic activity. This is Maximins 1/H1 from Bombina maxima (Giant fire-bellied toad).